The sequence spans 283 residues: Bifunctional protein FolD (283 aa).

NADP(+)-binding positions include 166–168 (GRS), Ser191, and Thr232.

This sequence belongs to the tetrahydrofolate dehydrogenase/cyclohydrolase family. Homodimer.

The catalysed reaction is (6R)-5,10-methylene-5,6,7,8-tetrahydrofolate + NADP(+) = (6R)-5,10-methenyltetrahydrofolate + NADPH. The enzyme catalyses (6R)-5,10-methenyltetrahydrofolate + H2O = (6R)-10-formyltetrahydrofolate + H(+). The protein operates within one-carbon metabolism; tetrahydrofolate interconversion. In terms of biological role, catalyzes the oxidation of 5,10-methylenetetrahydrofolate to 5,10-methenyltetrahydrofolate and then the hydrolysis of 5,10-methenyltetrahydrofolate to 10-formyltetrahydrofolate. The protein is Bifunctional protein FolD of Halothermothrix orenii (strain H 168 / OCM 544 / DSM 9562).